A 376-amino-acid polypeptide reads, in one-letter code: Putative F-box only protein 9 (376 aa).

One can recognise an F-box domain in the interval 1–44 (MSDLPPDLVEDILSRVPATSLKRLRFTCKQWNSLFKNRRFTEKH).

The polypeptide is Putative F-box only protein 9 (FBX9) (Arabidopsis thaliana (Mouse-ear cress)).